We begin with the raw amino-acid sequence, 261 residues long: Zinc import ATP-binding protein ZnuC (261 aa).

One can recognise an ABC transporter domain in the interval I5–A220. G37–S44 provides a ligand contact to ATP. The tract at residues H236–D261 is disordered. Over residues N252–D261 the composition is skewed to basic residues.

It belongs to the ABC transporter superfamily. Zinc importer (TC 3.A.1.15.5) family. In terms of assembly, the complex is composed of two ATP-binding proteins (ZnuC), two transmembrane proteins (ZnuB) and a solute-binding protein (ZnuA).

It localises to the cell inner membrane. The catalysed reaction is Zn(2+)(out) + ATP(in) + H2O(in) = Zn(2+)(in) + ADP(in) + phosphate(in) + H(+)(in). In terms of biological role, part of the ABC transporter complex ZnuABC involved in zinc import. Responsible for energy coupling to the transport system. This Vibrio vulnificus (strain CMCP6) protein is Zinc import ATP-binding protein ZnuC.